The sequence spans 583 residues: Probable GTP diphosphokinase CRSH, chloroplastic (583 aa).

A chloroplast-targeting transit peptide spans 1 to 58 (MSVIRPSPIPIPRCRSQVLHRRLYSIQLIQRRRRRWNPRSEVEDTAIESTARSPEAAG). The HD domain maps to 112-212 (PLSKALSLSI…MDLVSKLDEM (101 aa)). 2 EF-hand domains span residues 470-505 (TTTN…LGAP) and 507-539 (EDAE…VEFM). D483, N485, D487, M489, E494, D517, N519, D521, S523, and E528 together coordinate Ca(2+).

This sequence belongs to the RelA/SpoT family. Expressed in shoots, cotyledons, rosette and cauline leaves, stems, sepals, pistils and siliques.

The protein localises to the plastid. Its subcellular location is the chloroplast. The enzyme catalyses GTP + ATP = guanosine 3'-diphosphate 5'-triphosphate + AMP. Activated by calcium. Functionally, possesses calcium-dependent ppGpp (guanosine 3'-diphosphate 5'-diphosphate) synthetase activity in vitro and is able to functionally complement E.coli relA mutants. Plays an important role in the timing adjustment of pistil and pollen maturation required for successful pollination. May be involved in a rapid plant ppGpp-mediated response to pathogens and other stresses. In Arabidopsis thaliana (Mouse-ear cress), this protein is Probable GTP diphosphokinase CRSH, chloroplastic (CRSH).